Reading from the N-terminus, the 232-residue chain is TIR domain-containing adapter molecule 2 (232 aa).

A compositionally biased stretch (basic and acidic residues) spans 1–10 (MGIGKSKMDP). Positions 1-71 (MGIGKSKMDP…VEERPEEDTE (71 aa)) are disordered. Residue G2 is the site of N-myristoyl glycine attachment. Polar residues predominate over residues 19-29 (KSQSVDTSQSH). Positions 30–42 (HMSDSKQSEEISL) are enriched in basic and acidic residues. Residues 55 to 71 (PAEEQEGVEERPEEDTE) show a composition bias toward acidic residues. One can recognise a TIR domain in the interval 70 to 226 (TEEEVFLKFV…AIWKETRNTV (157 aa)). Y164 is modified (phosphotyrosine).

In terms of assembly, homodimer. Interacts with TLR4, TICAM1, IRF3 and IRF7 in response to LPS. Interacts with IL1R1, IL1RAP, IRAK2, IRAK3 and TRAF6. Interacts with protein kinase-inactive mutants of IRAK1 and IRAK4. Isoform 1 interacts with isoform 2; the interaction occurs in late endosomes and disrupts the interaction between isoform 1 and TICAM1. Interacts with MYD88; the interaction decreases after IL-18 stimulation in a time-dependent manner. Interacts with IL18R1 and IL18RAP. Interacts with TLR2. Interacts with RAB11FIP2. In terms of processing, myristoylated. Required for membrane association which is critical for its ability to initiate efficient signaling. Post-translationally, phosphorylated by PRKCE in response to LPS. Phosphorylation is essential for its function. It is depleted from the membrane upon phosphorylation. Tyrosine phosphorylation is inhibited by phosphatase PTPN4.

The protein localises to the cytoplasm. It localises to the golgi apparatus. Its subcellular location is the cell membrane. The protein resides in the endoplasmic reticulum. It is found in the early endosome. The protein localises to the late endosome. It localises to the cell projection. Its subcellular location is the phagocytic cup. Its function is as follows. Functions as a sorting adapter in different signaling pathways to facilitate downstream signaling leading to type I interferon induction. In TLR4 signaling, physically bridges TLR4 and TICAM1 and functionally transmits signal to TICAM1 in early endosomes after endocytosis of TLR4. In TLR2 signaling, physically bridges TLR2 and MYD88 and is required for the TLR2-dependent movement of MYD88 to endosomes following ligand engagement. Involved in IL-18 signaling and is proposed to function as a sorting adapter for MYD88 in IL-18 signaling during adaptive immune response. Forms a complex with RAB11FIP2 that is recruited to the phagosomes to promote the activation of the actin-regulatory GTPases RAC1 and CDC42 and subsequent phagocytosis of Gram-negative bacteria. The chain is TIR domain-containing adapter molecule 2 (TICAM2) from Bos taurus (Bovine).